Here is a 306-residue protein sequence, read N- to C-terminus: Phospho-N-acetylmuramoyl-pentapeptide-transferase (306 aa).

Helical transmembrane passes span 2-22, 47-67, 71-91, 105-125, 131-151, 162-182, 185-205, 209-229, 236-256, and 284-304; these read IALL…LKYW, SGTP…FLFF, FFIS…DLKL, IFLS…DYKI, LIID…IAVP, GLAG…SFHF, IALE…FNSH, IFMG…LSVV, LIFL…QVFF, and IVWR…VLWY.

The protein belongs to the glycosyltransferase 4 family. MraY subfamily. It depends on Mg(2+) as a cofactor.

Its subcellular location is the cell inner membrane. The catalysed reaction is UDP-N-acetyl-alpha-D-muramoyl-L-alanyl-gamma-D-glutamyl-meso-2,6-diaminopimeloyl-D-alanyl-D-alanine + di-trans,octa-cis-undecaprenyl phosphate = di-trans,octa-cis-undecaprenyl diphospho-N-acetyl-alpha-D-muramoyl-L-alanyl-D-glutamyl-meso-2,6-diaminopimeloyl-D-alanyl-D-alanine + UMP. The protein operates within cell wall biogenesis; peptidoglycan biosynthesis. Catalyzes the initial step of the lipid cycle reactions in the biosynthesis of the cell wall peptidoglycan: transfers peptidoglycan precursor phospho-MurNAc-pentapeptide from UDP-MurNAc-pentapeptide onto the lipid carrier undecaprenyl phosphate, yielding undecaprenyl-pyrophosphoryl-MurNAc-pentapeptide, known as lipid I. In Dictyoglomus thermophilum (strain ATCC 35947 / DSM 3960 / H-6-12), this protein is Phospho-N-acetylmuramoyl-pentapeptide-transferase.